A 383-amino-acid polypeptide reads, in one-letter code: Acetylornithine deacetylase (383 aa).

His80 is a Zn(2+) binding site. The active site involves Asp82. Asp112 is a binding site for Zn(2+). Residue Glu144 is part of the active site. Residues Glu145, Glu169, and His355 each contribute to the Zn(2+) site.

It belongs to the peptidase M20A family. ArgE subfamily. As to quaternary structure, homodimer. Zn(2+) serves as cofactor. Co(2+) is required as a cofactor. Requires glutathione as cofactor.

The protein resides in the cytoplasm. The enzyme catalyses N(2)-acetyl-L-ornithine + H2O = L-ornithine + acetate. It participates in amino-acid biosynthesis; L-arginine biosynthesis; L-ornithine from N(2)-acetyl-L-ornithine (linear): step 1/1. Catalyzes the hydrolysis of the amide bond of N(2)-acetylated L-amino acids. Cleaves the acetyl group from N-acetyl-L-ornithine to form L-ornithine, an intermediate in L-arginine biosynthesis pathway, and a branchpoint in the synthesis of polyamines. This Salmonella agona (strain SL483) protein is Acetylornithine deacetylase.